Consider the following 307-residue polypeptide: Mycothiol acetyltransferase (307 aa).

N-acetyltransferase domains lie at Thr12–Pro152 and Val160–Ser307. Position 43 (Glu43) interacts with 1D-myo-inositol 2-(L-cysteinylamino)-2-deoxy-alpha-D-glucopyranoside. Leu87–Val89 is a binding site for acetyl-CoA. 3 residues coordinate 1D-myo-inositol 2-(L-cysteinylamino)-2-deoxy-alpha-D-glucopyranoside: Glu187, Lys227, and Glu239. Acetyl-CoA-binding positions include Leu243–Val245 and His250–Lys256. Tyr278 is a 1D-myo-inositol 2-(L-cysteinylamino)-2-deoxy-alpha-D-glucopyranoside binding site.

The protein belongs to the acetyltransferase family. MshD subfamily. As to quaternary structure, monomer.

The enzyme catalyses 1D-myo-inositol 2-(L-cysteinylamino)-2-deoxy-alpha-D-glucopyranoside + acetyl-CoA = mycothiol + CoA + H(+). Catalyzes the transfer of acetyl from acetyl-CoA to desacetylmycothiol (Cys-GlcN-Ins) to form mycothiol. This Salinispora arenicola (strain CNS-205) protein is Mycothiol acetyltransferase.